We begin with the raw amino-acid sequence, 233 residues long: Large ribosomal subunit protein uL1 (233 aa).

The protein belongs to the universal ribosomal protein uL1 family. Part of the 50S ribosomal subunit.

Binds directly to 23S rRNA. The L1 stalk is quite mobile in the ribosome, and is involved in E site tRNA release. Functionally, protein L1 is also a translational repressor protein, it controls the translation of the L11 operon by binding to its mRNA. The protein is Large ribosomal subunit protein uL1 of Pseudoalteromonas atlantica (strain T6c / ATCC BAA-1087).